Here is a 223-residue protein sequence, read N- to C-terminus: Thiamine-phosphate synthase (223 aa).

4-amino-2-methyl-5-(diphosphooxymethyl)pyrimidine contacts are provided by residues 42–46 (QLRDK) and N83. D84 and D103 together coordinate Mg(2+). S122 contacts 4-amino-2-methyl-5-(diphosphooxymethyl)pyrimidine. 2-[(2R,5Z)-2-carboxy-4-methylthiazol-5(2H)-ylidene]ethyl phosphate is bound at residue 148 to 150 (TPT). K151 serves as a coordination point for 4-amino-2-methyl-5-(diphosphooxymethyl)pyrimidine. G179 lines the 2-[(2R,5Z)-2-carboxy-4-methylthiazol-5(2H)-ylidene]ethyl phosphate pocket.

It belongs to the thiamine-phosphate synthase family. Requires Mg(2+) as cofactor.

The catalysed reaction is 2-[(2R,5Z)-2-carboxy-4-methylthiazol-5(2H)-ylidene]ethyl phosphate + 4-amino-2-methyl-5-(diphosphooxymethyl)pyrimidine + 2 H(+) = thiamine phosphate + CO2 + diphosphate. The enzyme catalyses 2-(2-carboxy-4-methylthiazol-5-yl)ethyl phosphate + 4-amino-2-methyl-5-(diphosphooxymethyl)pyrimidine + 2 H(+) = thiamine phosphate + CO2 + diphosphate. It catalyses the reaction 4-methyl-5-(2-phosphooxyethyl)-thiazole + 4-amino-2-methyl-5-(diphosphooxymethyl)pyrimidine + H(+) = thiamine phosphate + diphosphate. The protein operates within cofactor biosynthesis; thiamine diphosphate biosynthesis; thiamine phosphate from 4-amino-2-methyl-5-diphosphomethylpyrimidine and 4-methyl-5-(2-phosphoethyl)-thiazole: step 1/1. In terms of biological role, condenses 4-methyl-5-(beta-hydroxyethyl)thiazole monophosphate (THZ-P) and 2-methyl-4-amino-5-hydroxymethyl pyrimidine pyrophosphate (HMP-PP) to form thiamine monophosphate (TMP). In Mycobacterium avium (strain 104), this protein is Thiamine-phosphate synthase.